The following is a 267-amino-acid chain: 4-hydroxy-tetrahydrodipicolinate reductase (267 aa).

8 to 13 (GAAGRM) is an NAD(+) binding site. NADP(+) is bound at residue arginine 35. NAD(+) contacts are provided by residues 98-100 (GTT) and 122-125 (AANF). The active-site Proton donor/acceptor is the histidine 155. Histidine 156 provides a ligand contact to (S)-2,3,4,5-tetrahydrodipicolinate. The active-site Proton donor is the lysine 159. Residue 165-166 (GT) coordinates (S)-2,3,4,5-tetrahydrodipicolinate.

The protein belongs to the DapB family.

The protein resides in the cytoplasm. It catalyses the reaction (S)-2,3,4,5-tetrahydrodipicolinate + NAD(+) + H2O = (2S,4S)-4-hydroxy-2,3,4,5-tetrahydrodipicolinate + NADH + H(+). The catalysed reaction is (S)-2,3,4,5-tetrahydrodipicolinate + NADP(+) + H2O = (2S,4S)-4-hydroxy-2,3,4,5-tetrahydrodipicolinate + NADPH + H(+). The protein operates within amino-acid biosynthesis; L-lysine biosynthesis via DAP pathway; (S)-tetrahydrodipicolinate from L-aspartate: step 4/4. In terms of biological role, catalyzes the conversion of 4-hydroxy-tetrahydrodipicolinate (HTPA) to tetrahydrodipicolinate. The sequence is that of 4-hydroxy-tetrahydrodipicolinate reductase from Azotobacter vinelandii (strain DJ / ATCC BAA-1303).